The primary structure comprises 943 residues: Lysine-specific demethylase JMJ21 (943 aa).

In terms of domain architecture, F-box spans Leu14–Leu60. One can recognise a JmjC domain in the interval Glu216 to Tyr379. Fe cation contacts are provided by His262, Asp264, and His347. Positions Asn396 to Asn410 are enriched in acidic residues. A disordered region spans residues Asn396–Asp438.

This sequence belongs to the JARID1 histone demethylase family. It depends on Fe(2+) as a cofactor. Mostly expressed in leaves, and, to a lower extent, in inflorescences, roots, siliques and stems.

It localises to the nucleus. Functionally, may function as histone H3 lysine demethylase and be involved in regulation of gene expression. This is Lysine-specific demethylase JMJ21 from Arabidopsis thaliana (Mouse-ear cress).